A 741-amino-acid chain; its full sequence is Zinc transporter ZIP6 (741 aa).

The N-terminal stretch at 1 to 20 (MATNLSVIMILTFALWVTNP) is a signal peptide. Residues 21 to 311 (LHELQSTAAF…PKTYSLQIAW (291 aa)) lie on the Extracellular side of the membrane. N-linked (GlcNAc...) asparagine glycosylation is present at Asn-68. Residues 95 to 111 (HDHERHSDHERHSDHER) show a composition bias toward basic and acidic residues. Disordered stretches follow at residues 95-172 (HDHE…EVTS) and 189-213 (ETPK…EKSR). The span at 135-147 (DNSGKNPNTSQGK) shows a compositional bias: polar residues. An N-linked (GlcNAc...) asparagine glycan is attached at Asn-142. Residues 150-162 (RPAEHVNGRRNGK) show a composition bias toward basic and acidic residues. The span at 163 to 172 (ESASSSEVTS) shows a compositional bias: low complexity. Over residues 200 to 209 (INPSTPPSIT) the composition is skewed to polar residues. Residues Asn-226, Asn-251, and Asn-268 are each glycosylated (N-linked (GlcNAc...) asparagine). Residues 312 to 332 (LGGFIAISIISFLSLLGVILV) traverse the membrane as a helical segment. The Cytoplasmic portion of the chain corresponds to 333-341 (PLMNRVFFK). The chain crosses the membrane as a helical span at residues 342–362 (FLLSFLVALAVGTLSGDALLH). The Extracellular portion of the chain corresponds to 363-409 (LLPHSHASHHHSHSHEEPAMEMKRGPLFSHLSAQNLEESSYFDSTWK). Residues 410–430 (GLTALGGLYFMFLVEHVLTLI) form a helical membrane-spanning segment. Topologically, residues 431-643 (KQFKDKKKKN…LKAGMTVKQA (213 aa)) are cytoplasmic. A disordered region spans residues 434 to 494 (KDKKKKNQKK…QEPSPFDSQQ (61 aa)). Positions 450-475 (VESKKQLSKYESQLSTNEEKVDTGER) form a coiled coil. 2 positions are modified to phosphoserine: Ser-457 and Ser-464. The segment covering 466-477 (NEEKVDTGERPE) has biased composition (basic and acidic residues). A compositionally biased stretch (polar residues) spans 481 to 494 (QADSQEPSPFDSQQ). The helical transmembrane segment at 644–664 (VLYNALSAMLAYLGMATGIFI) threads the bilayer. Over 665 to 672 (GHYAENVS) the chain is Extracellular. The N-linked (GlcNAc...) asparagine glycan is linked to Asn-670. Residues 673–693 (MWIFALTAGLFMYVALVDMVP) form a helical membrane-spanning segment. The Cytoplasmic segment spans residues 694 to 710 (EMLHNDASDHGCSRWGY). The chain crosses the membrane as a helical span at residues 711-731 (FFLQNAGILLGFGIMLLISIF). Residues 732–741 (EHKIVFRINF) lie on the Extracellular side of the membrane.

This sequence belongs to the ZIP transporter (TC 2.A.5) family. Interacts with SLC39A10; which triggers cells to undergo EMT and mitosis. Found in a complex with SLC39A6, SLC39A10 and with the 'Ser-727' phosphorylated form of STAT3 throughout mitosis. Found in a complex with SLC39A6, SLC39A10 and with NCAM1; this complex controls NCAM1 phosphorylation and integration into focal adhesion complexes during epithelial-to-mesenchymal transition (EMT). Found in a complex with SLC39A6, SLC39A10 and with GSK3B that controls NCAM1 phosphorylation. In terms of processing, cleaved on the N-terminus before locating to the plasma membrane. Post-translationally, N-glycosylated. Phosphorylated by ZAP70 in response to TCR stimulation leading to its activation. As to expression, expressed in the endothelial cells of the brain capillaries.

The protein resides in the cell membrane. It is found in the cell projection. It localises to the lamellipodium membrane. The protein localises to the membrane raft. Its subcellular location is the apical cell membrane. It catalyses the reaction Zn(2+)(in) = Zn(2+)(out). Zinc-influx transporter which plays a role in zinc homeostasis and in the induction of epithelial-to-mesenchymal transition (EMT). When associated with SLC39A10, the heterodimer formed by SLC39A10 and SLC39A6 mediates cellular zinc uptake to trigger cells to undergo epithelial- to-mesenchymal transition (EMT). The SLC39A10-SLC39A6 heterodimer also controls NCAM1 phosphorylation and its integration into focal adhesion complexes during EMT. Zinc influx inactivates GSK3B, enabling unphosphorylated SNAI1 in the nucleus to down-regulate adherence genes such as CDH1, causing loss of cell adherence. In addition, the SLC39A10-SLC39A6 heterodimer plays an essentiel role in initiating mitosis by importing zinc into cells to initiate a pathway resulting in the onset of mitosis. Participates in the T-cell receptor signaling regulation by mediating cellular zinc uptake into activated lymphocytes. Regulates the zinc influx necessary for proper meiotic progression to metaphase II (MII) that allows the oocyte-to-egg transition. In Rattus norvegicus (Rat), this protein is Zinc transporter ZIP6.